Here is a 286-residue protein sequence, read N- to C-terminus: Putative transcription factor kapC (286 aa).

A compositionally biased stretch (pro residues) spans 1–10 (MQPALAPAPH). The tract at residues 1-120 (MQPALAPAPH…QNRAAQRAFR (120 aa)) is disordered. The segment covering 26-40 (HDQLLAAHQHLSHPQ) has biased composition (low complexity). The span at 41 to 54 (QPRPQAPATQPPHM) shows a compositional bias: pro residues. Polar residues predominate over residues 55 to 67 (QPNTASPRDQNNI). Residues 81-92 (PQTPPQPEPAPQ) show a composition bias toward pro residues. Residues 102–165 (PLSTSKRAAQ…EYIINLQTRL (64 aa)) enclose the bZIP domain. The segment at 103 to 126 (LSTSKRAAQNRAAQRAFRQRKESY) is basic motif. A compositionally biased stretch (low complexity) spans 108–118 (RAAQNRAAQRA). The leucine-zipper stretch occupies residues 130-161 (LEEQVKHQEAITEEYKALHAENYQLREYIINL). The interval 197–286 (RGNAASAGPA…QEPDGLPVVS (90 aa)) is disordered. The segment covering 198–222 (GNAASAGPAPAGPGPQQSQPNQNQG) has biased composition (low complexity).

It belongs to the bZIP family.

It is found in the nucleus. Functionally, putative transcription factor. The protein is Putative transcription factor kapC (kapC) of Aspergillus terreus (strain NIH 2624 / FGSC A1156).